Consider the following 62-residue polypeptide: Photosystem II reaction center protein Z (62 aa).

2 helical membrane-spanning segments follow: residues 8 to 28 (AVFALIATSSILLISVPVVFA) and 41 to 61 (FSGTSLWIGLVFLVGILNSLI).

Belongs to the PsbZ family. In terms of assembly, PSII is composed of 1 copy each of membrane proteins PsbA, PsbB, PsbC, PsbD, PsbE, PsbF, PsbH, PsbI, PsbJ, PsbK, PsbL, PsbM, PsbT, PsbY, PsbZ, Psb30/Ycf12, at least 3 peripheral proteins of the oxygen-evolving complex and a large number of cofactors. It forms dimeric complexes.

It localises to the plastid. The protein resides in the chloroplast thylakoid membrane. Functionally, may control the interaction of photosystem II (PSII) cores with the light-harvesting antenna, regulates electron flow through the 2 photosystem reaction centers. PSII is a light-driven water plastoquinone oxidoreductase, using light energy to abstract electrons from H(2)O, generating a proton gradient subsequently used for ATP formation. The polypeptide is Photosystem II reaction center protein Z (Citrus sinensis (Sweet orange)).